Consider the following 840-residue polypeptide: Phosphatidylinositol-glycan-specific phospholipase D (840 aa).

The signal sequence occupies residues 1–23 (MSAFRLWPGLLIMLGSLCHRGSP). N-linked (GlcNAc...) asparagine glycosylation is found at N94, N271, N292, N307, and N321. 7 FG-GAP repeats span residues 367–428 (SPLA…GLPP), 436–497 (EAHR…GGMS), 499–559 (SPNI…LSDK), 563–623 (NVEA…SLGR), 633–693 (QSWF…GATR), 704–770 (LLLS…TLGD), and 788–840 (QYVL…LGSD). 5 N-linked (GlcNAc...) asparagine glycosylation sites follow: N501, N568, N591, N604, and N659.

It belongs to the GPLD1 family. In terms of assembly, monomer.

Its subcellular location is the secreted. It catalyses the reaction a 6-(alpha-D-glucosaminyl)-1-(1,2-diacyl-sn-glycero-3-phospho)-1D-myo-inositol + H2O = 6-(alpha-D-glucosaminyl)-1D-myo-inositol + a 1,2-diacyl-sn-glycero-3-phosphate + H(+). Its function is as follows. This protein hydrolyzes the inositol phosphate linkage in proteins anchored by phosphatidylinositol glycans (GPI-anchor) thus releasing these proteins from the membrane. The chain is Phosphatidylinositol-glycan-specific phospholipase D (GPLD1) from Homo sapiens (Human).